The chain runs to 80 residues: Raniseptin-4 (80 aa).

Positions 1 to 22 are cleaved as a signal peptide; sequence MAFLKKSLFLVLFLGIVSLSIC. The propeptide occupies 23–49; that stretch reads EEEKREGEEEEKQEEENEELSEEELRD.

It belongs to the frog skin active peptide (FSAP) family. Dermaseptin subfamily. Expressed by the skin glands.

It is found in the secreted. Has antibacterial activity. The sequence is that of Raniseptin-4 from Boana raniceps (Chaco tree frog).